Reading from the N-terminus, the 238-residue chain is Purine nucleoside phosphorylase DeoD-type (238 aa).

Position 4 (His-4) interacts with a purine D-ribonucleoside. Residues Gly-20, Arg-24, Arg-43, and 87-90 (RVGS) each bind phosphate. A purine D-ribonucleoside contacts are provided by residues 179–181 (EME) and 203–204 (SD). Asp-204 (proton donor) is an active-site residue.

Belongs to the PNP/UDP phosphorylase family. Homohexamer; trimer of homodimers.

The enzyme catalyses a purine D-ribonucleoside + phosphate = a purine nucleobase + alpha-D-ribose 1-phosphate. The catalysed reaction is a purine 2'-deoxy-D-ribonucleoside + phosphate = a purine nucleobase + 2-deoxy-alpha-D-ribose 1-phosphate. Its function is as follows. Catalyzes the reversible phosphorolytic breakdown of the N-glycosidic bond in the beta-(deoxy)ribonucleoside molecules, with the formation of the corresponding free purine bases and pentose-1-phosphate. The chain is Purine nucleoside phosphorylase DeoD-type from Pasteurella multocida (strain Pm70).